The following is a 2863-amino-acid chain: Lipopolysaccharide-responsive and beige-like anchor protein (2863 aa).

Disordered stretches follow at residues 1-35 (MASE…ALSL), 969-1005 (VGSQ…ESAS), and 1018-1039 (EMKA…ETLT). An N-acetylalanine modification is found at A2. 3 positions are modified to phosphoserine: S10, S979, and S1003. Residues 985–1005 (FTTNGNENSSIEKTSSLESAS) show a composition bias toward polar residues. A coiled-coil region spans residues 1006 to 1053 (NIELQTTNTSYEEMKAEQENQELPDEGTLEETLTNETRNADDLEVSSD). The segment covering 1024–1034 (ENQELPDEGTL) has biased composition (acidic residues). 3 positions are modified to phosphoserine: S1100, S1135, and S1139. The segment covering 1161–1176 (PVTEKQTDTETQDSKD) has biased composition (basic and acidic residues). Residues 1161 to 1193 (PVTEKQTDTETQDSKDSGIQTMTASGSSAMSPE) are disordered. Polar residues predominate over residues 1177–1193 (SGIQTMTASGSSAMSPE). Residues S1233, S1247, and S1261 each carry the phosphoserine modification. The WD 1 repeat unit spans residues 1301–1343 (STVFRIPEFNWSQMHQRLLTDLLFSIETDIQMWRSHSTKTVMD). Residues S1488 and S1498 each carry the phosphoserine modification. Residues 1531 to 1548 (FLALAVVYFISVLMVSKY) form a helical membrane-spanning segment. A compositionally biased stretch (low complexity) spans 1586–1599 (LTTASVEESESTSS). Disordered regions lie at residues 1586–1668 (LTTA…KATP) and 1759–1789 (QASD…VSQD). S1605 bears the Phosphoserine mark. Positions 1650–1664 (KSPETKNDRGNDLDT) are enriched in basic and acidic residues. S1767, S1770, and S2064 each carry phosphoserine. The span at 1769-1789 (GSRSSNAKLPSVPTVDSVSQD) shows a compositional bias: polar residues. In terms of domain architecture, BEACH-type PH spans 2073 to 2181 (NLAGPVSLST…TVKKVVNYLP (109 aa)). The BEACH domain occupies 2200–2489 (ASPRQLFKAS…QLLIEPHPPR (290 aa)). Position 2496 is a phosphoserine (S2496). WD repeat units lie at residues 2591–2633 (DQSI…LIQV), 2636–2679 (GHWD…SGIG), 2695–2735 (GHDY…RTLE), 2777–2816 (ETDD…QLFA), and 2819–2858 (GCDA…WHHE).

Interacts with TOM1 and TOLLIP. Ubiquitous.

It localises to the cell membrane. Its subcellular location is the endoplasmic reticulum membrane. The protein resides in the golgi apparatus. It is found in the trans-Golgi network membrane. The protein localises to the lysosome membrane. Involved in coupling signal transduction and vesicle trafficking to enable polarized secretion and/or membrane deposition of immune effector molecules. Involved in phagophore growth during mitophagy by regulating ATG9A trafficking to mitochondria. In Homo sapiens (Human), this protein is Lipopolysaccharide-responsive and beige-like anchor protein.